We begin with the raw amino-acid sequence, 530 residues long: Dual specificity calcium/calmodulin-dependent 3',5'-cyclic nucleotide phosphodiesterase 1A (530 aa).

Calmodulin-binding regions lie at residues 24 to 44 and 114 to 137; these read TEKM…QLEK and EKPR…MYRK. A PDEase domain is found at 142–508; that stretch reads VGLAYPEAVI…ERWKELAAQG (367 aa). His219 acts as the Proton donor in catalysis. Zn(2+) contacts are provided by His223, His259, Asp260, and Asp366. Position 260 (Asp260) interacts with Mg(2+). Disordered stretches follow at residues 450 to 471 and 502 to 530; these read TKTP…NDGT and KELA…ETHS. The span at 451 to 471 shows a compositional bias: polar residues; the sequence is KTPSYGASRRSNMKGTTNDGT. Residues 510–530 show a composition bias toward basic and acidic residues; the sequence is PDPHKNSDLVNAEEKHAETHS.

This sequence belongs to the cyclic nucleotide phosphodiesterase family. PDE1 subfamily. In terms of assembly, homodimer. Interacts with YWHAZ. Requires Zn(2+) as cofactor. The cofactor is Mg(2+).

The enzyme catalyses a nucleoside 3',5'-cyclic phosphate + H2O = a nucleoside 5'-phosphate + H(+). It carries out the reaction 3',5'-cyclic GMP + H2O = GMP + H(+). The catalysed reaction is 3',5'-cyclic AMP + H2O = AMP + H(+). Type I PDE are activated by the binding of calmodulin in the presence of Ca(2+). Functionally, calcium/calmodulin-dependent cyclic nucleotide phosphodiesterase with a dual specificity for the second messengers cGMP and cAMP, which are key regulators of many important physiological processes. Has a higher efficiency with cGMP compared to cAMP. The protein is Dual specificity calcium/calmodulin-dependent 3',5'-cyclic nucleotide phosphodiesterase 1A of Bos taurus (Bovine).